Consider the following 399-residue polypeptide: Alpha-ketoglutarate-dependent dioxygenase fc-dox (399 aa).

Fe cation contacts are provided by histidine 158 and aspartate 160. A 2-oxoglutarate-binding site is contributed by threonine 203. Histidine 355 contacts Fe cation. Residue arginine 367 coordinates 2-oxoglutarate. The interval 371–399 is disordered; sequence QGWLAGDRPPKGPVPIPDPRARSSIYYQK.

The protein belongs to the TfdA dioxygenase family. Fe(2+) serves as cofactor.

It functions in the pathway mycotoxin biosynthesis. Its function is as follows. Alpha-ketoglutarate-dependent dioxygenase; part of the 2 gene clusters that mediate the biosynthesis of fusicoccins, diterpene glucosides that display phytohormone-like activity and function as potent activators of plasma membrane H(+)-ATPases in plants by modifying 14-3-3 proteins and cause the plant disease constriction canker. The first step in the pathway is performed by the fusicoccadiene synthase PaFS that possesses both prenyl transferase and terpene cyclase activity, converting isopentenyl diphosphate and dimethylallyl diphosphate into geranylgeranyl diphosphate (GGDP) and successively converting GGDP into fusicocca-2,10(14)-diene, a precursor for fusicoccin H. The second step is the oxidation at the C-8 position by the cytochrome P450 monooxygenase PaP450-2 to yield fusicocca-2,10(14)-diene-8-beta-ol. The cytochrome P450 monooxygenase PaP450-1 then catalyzes the hydroxylation at the C-16 position to produce fusicocca-2,10(14)-diene-8-beta,16-diol. The dioxygenase fc-dox then catalyzes the 16-oxydation of fusicocca-2,10(14)-diene-8-beta,16-diol to yield an aldehyde (8-beta-hydroxyfusicocca-1,10(14)-dien-16-al). The short-chain dehydrogenase/reductase fc-sdr catalyzes the reduction of the aldehyde to yield fusicocca-1,10(14)-diene-8-beta,16-diol. The next step is the hydroxylation at C-9 performed by the cytochrome P450 monooxygenase PaP450-3 that leads to fusicoccin H aglycon which is glycosylated to fusicoccin H by the O-glycosyltransferase PaGT. Hydroxylation at C-12 by the cytochrome P450 monooxygenase PaP450-4 leads then to the production of fusicoccin Q and is followed by methylation by the O-methyltransferase PaMT to yield fusicoccin P. Fusicoccin P is further converted to fusicoccin J via prenylation by the O-glucose prenyltransferase PaPT. Cytochrome P450 monooxygenase PaP450-5 then performs hydroxylation at C-19 to yield dideacetyl-fusicoccin A which is acetylated to 3'-O-deacetyl-fusicoccin A by the O-acetyltransferase PaAT-2. Finally, a another acetylation by the O-acetyltransferase PaAT-1 yields fusicoccin A. The protein is Alpha-ketoglutarate-dependent dioxygenase fc-dox of Phomopsis amygdali (Fusicoccum amygdali).